The chain runs to 375 residues: Baseplate protein gp16 (375 aa).

The protein belongs to the skunalikevirus baseplate protein gp16 family. In terms of assembly, homotrimer.

Its subcellular location is the virion. Its function is as follows. Forms a dome thereby closing the central channel at the end of the baseplate. Changes its conformation upon activation by calcium allowing the channel to open at the bottom of the baseplate for DNA ejection. The protein is Baseplate protein gp16 of Lactococcus lactis (Lactococcus lactis bacteriophage SK1).